Reading from the N-terminus, the 574-residue chain is Arginine--tRNA ligase (574 aa).

Residues 121-131 carry the 'HIGH' region motif; that stretch reads PNIAKEMHIGH.

Belongs to the class-I aminoacyl-tRNA synthetase family. In terms of assembly, monomer.

It localises to the cytoplasm. It catalyses the reaction tRNA(Arg) + L-arginine + ATP = L-arginyl-tRNA(Arg) + AMP + diphosphate. The sequence is that of Arginine--tRNA ligase from Buchnera aphidicola subsp. Acyrthosiphon pisum (strain Tuc7).